A 415-amino-acid chain; its full sequence is MAEIPLYFVDLQDDLDDYGFEDYGTDCDNMRVTAFLDIPGQDNLPPLTRLEKYAFSENTFNRQIIARGLLDIFRDFGNNEEDFLTVMEIVVRLSEDAEPTVRTELMEQIPPIAIFLQENRSNFPVVLSEYLIPIVVRYLTDPNNQIICKMASMLSKSTVERLLLPRFCELCGDRKLFQVRKVCAANFGDICHAVGQEATEKFLIPKFFELCSDAVWGMRKACAECFTAVSHSSSPGVRRTQLFPLFIRLVSDPCRWVHQAAFQSLGPFTSTFANPSRAGLYLREDGALSIWPLTQDLDSGFASGSPAPSSGGNTSPASLTRSAKPVRSEPELPVEGTSAKTSDCPHSSSSSDGPAESPVESCVSAGAEWTRVSPETSACSKLSDMNDLPISSYPGSDSWACPGNTEDVFSHFLYW.

4 HEAT repeats span residues valine 86–proline 124, leucine 163–phenylalanine 202, leucine 203–glutamine 241, and leucine 242–leucine 280. Positions phenylalanine 301–serine 318 are enriched in low complexity. The segment at phenylalanine 301 to cysteine 362 is disordered.

Functionally, may be a regulatory subunit of serine/threonine-protein phosphatase 4. The sequence is that of Putative serine/threonine-protein phosphatase 4 regulatory subunit 1-like (PPP4R1L) from Homo sapiens (Human).